The primary structure comprises 207 residues: Peptidyl-tRNA hydrolase (207 aa).

Tyrosine 15 lines the tRNA pocket. Catalysis depends on histidine 20, which acts as the Proton acceptor. TRNA contacts are provided by phenylalanine 66, asparagine 68, and asparagine 114. Positions 187 to 207 (HTTKPPRPKPARPATAESDKG) are disordered. Low complexity predominate over residues 198 to 207 (RPATAESDKG).

It belongs to the PTH family. Monomer.

The protein localises to the cytoplasm. It carries out the reaction an N-acyl-L-alpha-aminoacyl-tRNA + H2O = an N-acyl-L-amino acid + a tRNA + H(+). Functionally, hydrolyzes ribosome-free peptidyl-tRNAs (with 1 or more amino acids incorporated), which drop off the ribosome during protein synthesis, or as a result of ribosome stalling. Catalyzes the release of premature peptidyl moieties from peptidyl-tRNA molecules trapped in stalled 50S ribosomal subunits, and thus maintains levels of free tRNAs and 50S ribosomes. This is Peptidyl-tRNA hydrolase from Delftia acidovorans (strain DSM 14801 / SPH-1).